A 944-amino-acid chain; its full sequence is Isoleucine--tRNA ligase (944 aa).

Positions 58–68 (PYANGSIHIGH) match the 'HIGH' region motif. Residue Glu563 participates in L-isoleucyl-5'-AMP binding. The 'KMSKS' region signature appears at 604 to 608 (KMSKS). Position 607 (Lys607) interacts with ATP. 4 residues coordinate Zn(2+): Cys907, Cys910, Cys927, and Cys930.

It belongs to the class-I aminoacyl-tRNA synthetase family. IleS type 1 subfamily. As to quaternary structure, monomer. Zn(2+) is required as a cofactor.

The protein resides in the cytoplasm. It carries out the reaction tRNA(Ile) + L-isoleucine + ATP = L-isoleucyl-tRNA(Ile) + AMP + diphosphate. Its function is as follows. Catalyzes the attachment of isoleucine to tRNA(Ile). As IleRS can inadvertently accommodate and process structurally similar amino acids such as valine, to avoid such errors it has two additional distinct tRNA(Ile)-dependent editing activities. One activity is designated as 'pretransfer' editing and involves the hydrolysis of activated Val-AMP. The other activity is designated 'posttransfer' editing and involves deacylation of mischarged Val-tRNA(Ile). In Salmonella typhimurium (strain LT2 / SGSC1412 / ATCC 700720), this protein is Isoleucine--tRNA ligase.